We begin with the raw amino-acid sequence, 132 residues long: Small ribosomal subunit protein uS8 (132 aa).

It belongs to the universal ribosomal protein uS8 family. Part of the 30S ribosomal subunit. Contacts proteins S5 and S12.

One of the primary rRNA binding proteins, it binds directly to 16S rRNA central domain where it helps coordinate assembly of the platform of the 30S subunit. The sequence is that of Small ribosomal subunit protein uS8 from Clostridium acetobutylicum (strain ATCC 824 / DSM 792 / JCM 1419 / IAM 19013 / LMG 5710 / NBRC 13948 / NRRL B-527 / VKM B-1787 / 2291 / W).